The chain runs to 94 residues: Cystatin-A3 (94 aa).

The short motif at 46-50 is the Secondary area of contact element; that stretch reads QLVNG.

This sequence belongs to the cystatin family.

Its subcellular location is the cytoplasm. Intracellular thiol proteinase inhibitor. This is Cystatin-A3 (cpiC) from Dictyostelium discoideum (Social amoeba).